A 346-amino-acid chain; its full sequence is Holliday junction branch migration complex subunit RuvB (346 aa).

The interval 2–183 (TDDRIIGAGA…FGIVQRLEFY (182 aa)) is large ATPase domain (RuvB-L). Residues Ile22, Arg23, Gly64, Lys67, Thr68, Thr69, 130 to 132 (EDF), Arg173, Tyr183, and Arg220 contribute to the ATP site. Thr68 contacts Mg(2+). Residues 184–254 (SVEELTRIVR…VAQAAMKMLK (71 aa)) are small ATPAse domain (RuvB-S). The segment at 257–346 (PEGFDELDRR…DLFAEVPDVG (90 aa)) is head domain (RuvB-H). DNA is bound by residues Arg293, Arg312, and Arg317.

It belongs to the RuvB family. In terms of assembly, homohexamer. Forms an RuvA(8)-RuvB(12)-Holliday junction (HJ) complex. HJ DNA is sandwiched between 2 RuvA tetramers; dsDNA enters through RuvA and exits via RuvB. An RuvB hexamer assembles on each DNA strand where it exits the tetramer. Each RuvB hexamer is contacted by two RuvA subunits (via domain III) on 2 adjacent RuvB subunits; this complex drives branch migration. In the full resolvosome a probable DNA-RuvA(4)-RuvB(12)-RuvC(2) complex forms which resolves the HJ.

It is found in the cytoplasm. The enzyme catalyses ATP + H2O = ADP + phosphate + H(+). Functionally, the RuvA-RuvB-RuvC complex processes Holliday junction (HJ) DNA during genetic recombination and DNA repair, while the RuvA-RuvB complex plays an important role in the rescue of blocked DNA replication forks via replication fork reversal (RFR). RuvA specifically binds to HJ cruciform DNA, conferring on it an open structure. The RuvB hexamer acts as an ATP-dependent pump, pulling dsDNA into and through the RuvAB complex. RuvB forms 2 homohexamers on either side of HJ DNA bound by 1 or 2 RuvA tetramers; 4 subunits per hexamer contact DNA at a time. Coordinated motions by a converter formed by DNA-disengaged RuvB subunits stimulates ATP hydrolysis and nucleotide exchange. Immobilization of the converter enables RuvB to convert the ATP-contained energy into a lever motion, pulling 2 nucleotides of DNA out of the RuvA tetramer per ATP hydrolyzed, thus driving DNA branch migration. The RuvB motors rotate together with the DNA substrate, which together with the progressing nucleotide cycle form the mechanistic basis for DNA recombination by continuous HJ branch migration. Branch migration allows RuvC to scan DNA until it finds its consensus sequence, where it cleaves and resolves cruciform DNA. The chain is Holliday junction branch migration complex subunit RuvB from Stenotrophomonas maltophilia (strain R551-3).